We begin with the raw amino-acid sequence, 78 residues long: ATP synthase subunit a (78 aa).

Residues 34 to 54 (LTNIGLYLTIGIFLILTYSLL) traverse the membrane as a helical segment.

It belongs to the ATPase A chain family. In terms of assembly, F-type ATPases have 2 components, CF(1) - the catalytic core - and CF(0) - the membrane proton channel. CF(1) has five subunits: alpha(3), beta(3), gamma(1), delta(1), epsilon(1). CF(0) has three main subunits: a, b and c.

Its subcellular location is the mitochondrion inner membrane. In terms of biological role, mitochondrial membrane ATP synthase (F(1)F(0) ATP synthase or Complex V) produces ATP from ADP in the presence of a proton gradient across the membrane which is generated by electron transport complexes of the respiratory chain. F-type ATPases consist of two structural domains, F(1) - containing the extramembraneous catalytic core and F(0) - containing the membrane proton channel, linked together by a central stalk and a peripheral stalk. During catalysis, ATP synthesis in the catalytic domain of F(1) is coupled via a rotary mechanism of the central stalk subunits to proton translocation. Key component of the proton channel; it may play a direct role in the translocation of protons across the membrane. The polypeptide is ATP synthase subunit a (atp6) (Aspergillus amstelodami).